Consider the following 196-residue polypeptide: Nucleoid occlusion factor SlmA (196 aa).

Residues 7–68 (INRREEILQA…GLIEFIEESL (62 aa)) enclose the HTH tetR-type domain. The H-T-H motif DNA-binding region spans 31-50 (TTAKLAKQVGVSEAALYRHF). Residues 110–139 (HALMFENERLRDRINQLFERIETSLRQILR) are a coiled coil.

The protein belongs to the nucleoid occlusion factor SlmA family. As to quaternary structure, homodimer. Interacts with FtsZ.

Its subcellular location is the cytoplasm. The protein resides in the nucleoid. Required for nucleoid occlusion (NO) phenomenon, which prevents Z-ring formation and cell division over the nucleoid. Acts as a DNA-associated cell division inhibitor that binds simultaneously chromosomal DNA and FtsZ, and disrupts the assembly of FtsZ polymers. SlmA-DNA-binding sequences (SBS) are dispersed on non-Ter regions of the chromosome, preventing FtsZ polymerization at these regions. In Vibrio cholerae serotype O1 (strain ATCC 39315 / El Tor Inaba N16961), this protein is Nucleoid occlusion factor SlmA.